The chain runs to 122 residues: Ribosome-binding factor A (122 aa).

It belongs to the RbfA family. In terms of assembly, monomer. Binds 30S ribosomal subunits, but not 50S ribosomal subunits or 70S ribosomes.

It is found in the cytoplasm. In terms of biological role, one of several proteins that assist in the late maturation steps of the functional core of the 30S ribosomal subunit. Associates with free 30S ribosomal subunits (but not with 30S subunits that are part of 70S ribosomes or polysomes). Required for efficient processing of 16S rRNA. May interact with the 5'-terminal helix region of 16S rRNA. The protein is Ribosome-binding factor A of Polynucleobacter necessarius subsp. necessarius (strain STIR1).